Here is a 215-residue protein sequence, read N- to C-terminus: Probable phosphoglycerate mutase GpmB (215 aa).

Substrate contacts are provided by residues 8–15 (RHGETQWN), 21–22 (QG), arginine 58, 82–85 (ELDM), 104–105 (RR), and 151–152 (GM). The active-site Tele-phosphohistidine intermediate is histidine 9. Glutamate 82 functions as the Proton donor/acceptor in the catalytic mechanism.

The protein belongs to the phosphoglycerate mutase family. GpmB subfamily.

The catalysed reaction is (2R)-2-phosphoglycerate = (2R)-3-phosphoglycerate. The protein operates within carbohydrate degradation; glycolysis; pyruvate from D-glyceraldehyde 3-phosphate: step 3/5. In Cronobacter sakazakii (strain ATCC BAA-894) (Enterobacter sakazakii), this protein is Probable phosphoglycerate mutase GpmB.